A 283-amino-acid polypeptide reads, in one-letter code: Thymidylate synthase (283 aa).

DUMP is bound at residue Arg-22. Cys-160 acts as the Nucleophile in catalysis. Residues Arg-180–Asp-183, Asn-191, and His-221–Tyr-223 each bind dUMP. Asp-183 provides a ligand contact to (6R)-5,10-methylene-5,6,7,8-tetrahydrofolate. Residue Ser-282 participates in (6R)-5,10-methylene-5,6,7,8-tetrahydrofolate binding.

This sequence belongs to the thymidylate synthase family. Bacterial-type ThyA subfamily. In terms of assembly, homodimer.

Its subcellular location is the cytoplasm. The catalysed reaction is dUMP + (6R)-5,10-methylene-5,6,7,8-tetrahydrofolate = 7,8-dihydrofolate + dTMP. It participates in pyrimidine metabolism; dTTP biosynthesis. Its function is as follows. Catalyzes the reductive methylation of 2'-deoxyuridine-5'-monophosphate (dUMP) to 2'-deoxythymidine-5'-monophosphate (dTMP) while utilizing 5,10-methylenetetrahydrofolate (mTHF) as the methyl donor and reductant in the reaction, yielding dihydrofolate (DHF) as a by-product. This enzymatic reaction provides an intracellular de novo source of dTMP, an essential precursor for DNA biosynthesis. The chain is Thymidylate synthase from Vibrio cholerae serotype O1 (strain ATCC 39315 / El Tor Inaba N16961).